The sequence spans 186 residues: Tumor necrosis factor alpha-induced protein 8-like protein 1 (186 aa).

The protein belongs to the TNFAIP8 family.

The protein resides in the cytoplasm. This chain is Tumor necrosis factor alpha-induced protein 8-like protein 1 (TNFAIP8L1), found in Gallus gallus (Chicken).